The chain runs to 120 residues: UPF0715 membrane protein YwlA (120 aa).

4 consecutive transmembrane segments (helical) span residues 3–23 (YNYTVLLSAFTMSVLYSVIYI), 26–46 (FIIAALITMAFYFLFPYLIFA), 63–83 (LYLLYYLAAAFIANAIIFGML), and 95–115 (AFYLFAVLTALIYWIWDSVLL).

The protein belongs to the UPF0715 family.

It localises to the cell membrane. The chain is UPF0715 membrane protein YwlA (ywlA) from Bacillus subtilis (strain 168).